We begin with the raw amino-acid sequence, 523 residues long: Asc-type amino acid transporter 1 (523 aa).

The tract at residues 1 to 28 is disordered; the sequence is MAGHTQQPSGRGNPRPAPSPSPVPGTVP. Residues 15–25 show a composition bias toward pro residues; sequence RPAPSPSPVPG. 9 helical membrane passes run 40 to 60, 72 to 92, 113 to 133, 268 to 288, 310 to 330, 362 to 382, 388 to 408, 424 to 444, and 448 to 468; these read IGLL…GIFI, VGLA…GSLC, IFGG…MYPT, AIFI…IAYF, LLGY…FGGI, CTPI…MLVG, INYV…GLLL, LLIP…SFIS, and VCGV…LGVF. The segment at 499–523 is disordered; the sequence is APEEEENGPCPPSLLPATDKPSKPQ.

The protein belongs to the amino acid-polyamine-organocation (APC) superfamily. Disulfide-linked heterodimer with the amino acid transport protein SLC3A2/4F2hc. Expressed in brain, heart, kidney, liver, lung, pancreas, placenta, and skeletal muscle.

Its subcellular location is the cell membrane. It catalyses the reaction L-alanine(in) + glycine(out) = L-alanine(out) + glycine(in). The enzyme catalyses L-serine(out) + L-alanine(in) = L-serine(in) + L-alanine(out). It carries out the reaction L-threonine(out) + L-alanine(in) = L-threonine(in) + L-alanine(out). The catalysed reaction is L-cysteine(out) + L-alanine(in) = L-cysteine(in) + L-alanine(out). It catalyses the reaction 2-aminoisobutanoate(out) + L-alanine(in) = 2-aminoisobutanoate(in) + L-alanine(out). The enzyme catalyses D-serine(out) + L-alanine(in) = D-serine(in) + L-alanine(out). It carries out the reaction D-alanine(out) + L-alanine(in) = D-alanine(in) + L-alanine(out). The catalysed reaction is L-valine(out) + L-alanine(in) = L-valine(in) + L-alanine(out). It catalyses the reaction L-methionine(out) + L-alanine(in) = L-methionine(in) + L-alanine(out). The enzyme catalyses beta-alanine(out) + L-alanine(in) = beta-alanine(in) + L-alanine(out). It carries out the reaction D-cysteine(out) + L-alanine(in) = D-cysteine(in) + L-alanine(out). The catalysed reaction is D-threonine(out) + L-alanine(in) = D-threonine(in) + L-alanine(out). It catalyses the reaction D-isoleucine(out) + D-serine(in) = D-isoleucine(in) + D-serine(out). The enzyme catalyses D-serine(in) = D-serine(out). Associates with SLC3A2/4F2hc to form a functional heterodimeric complex that translocates small neutral L- and D-amino acids across the plasma membrane. Preferentially mediates exchange transport, but can also operate via facilitated diffusion. Acts as a major transporter for glycine, L- and D-serine in the central nervous system. At the spinal cord and brainstem regulates glycine metabolism and glycinergic inhibitory neurotransmission by providing for glycine de novo synthesis from L-serine and glycine recycling from astrocytes to glycinergic motor neurons. At Schaffer collateral-CA1 synapses mediates D-serine and glycine release that modulates post-synaptic activation of NMDA receptors and excitatory glutamatergic transmission. May regulate D-serine release from mesenchymal progenitors located in developing subcutaneous adipose tissue, favoring white adipocyte over thermogenic beige adipocyte lineage commitment. The polypeptide is Asc-type amino acid transporter 1 (SLC7A10) (Homo sapiens (Human)).